The chain runs to 117 residues: Ig heavy chain V region 1-62-3 (117 aa).

An N-terminal signal peptide occupies residues 1–19 (MGWSCIMLFLAATATGVHF). The segment at 20–49 (QVQLQQPGAELVKPGASVKLSSKASGYTFT) is framework-1. The interval 50–54 (SYWMH) is complementarity-determining-1. Residues 55–68 (WVKQRPGRGLEWIG) are framework-2. A complementarity-determining-2 region spans residues 69 to 85 (RIDPNSGGTKYNEKFKS). The segment at 86-117 (KATLTVDKPSSTAYMQLSSLTSEDSAVYYCAR) is framework-3.

The chain is Ig heavy chain V region 1-62-3 (Ighv1-62-3) from Mus musculus (Mouse).